Reading from the N-terminus, the 470-residue chain is Ribulose bisphosphate carboxylase large chain (470 aa).

Lysine 5 carries the post-translational modification N6,N6,N6-trimethyllysine. Substrate contacts are provided by asparagine 114 and threonine 164. The Proton acceptor role is filled by lysine 166. Lysine 168 contacts substrate. The Mg(2+) site is built by lysine 192, aspartate 194, and glutamate 195. Residue lysine 192 is modified to N6-carboxylysine. Catalysis depends on histidine 285, which acts as the Proton acceptor. Substrate contacts are provided by arginine 286, histidine 318, and serine 370.

Belongs to the RuBisCO large chain family. Type I subfamily. As to quaternary structure, heterohexadecamer of 8 large chains and 8 small chains; disulfide-linked. The disulfide link is formed within the large subunit homodimers. The cofactor is Mg(2+). Post-translationally, the disulfide bond which can form in the large chain dimeric partners within the hexadecamer appears to be associated with oxidative stress and protein turnover.

Its subcellular location is the plastid. The protein resides in the chloroplast. It catalyses the reaction 2 (2R)-3-phosphoglycerate + 2 H(+) = D-ribulose 1,5-bisphosphate + CO2 + H2O. The enzyme catalyses D-ribulose 1,5-bisphosphate + O2 = 2-phosphoglycolate + (2R)-3-phosphoglycerate + 2 H(+). In terms of biological role, ruBisCO catalyzes two reactions: the carboxylation of D-ribulose 1,5-bisphosphate, the primary event in carbon dioxide fixation, as well as the oxidative fragmentation of the pentose substrate in the photorespiration process. Both reactions occur simultaneously and in competition at the same active site. This Kigelia africana (Sausage tree) protein is Ribulose bisphosphate carboxylase large chain.